We begin with the raw amino-acid sequence, 264 residues long: Glutamate racemase (264 aa).

Substrate-binding positions include 10–11 (DS) and 42–43 (YG). Cysteine 73 functions as the Proton donor/acceptor in the catalytic mechanism. 74-75 (NT) contributes to the substrate binding site. Cysteine 183 (proton donor/acceptor) is an active-site residue. 184-185 (TH) contributes to the substrate binding site.

Belongs to the aspartate/glutamate racemases family.

The enzyme catalyses L-glutamate = D-glutamate. Its pathway is cell wall biogenesis; peptidoglycan biosynthesis. Functionally, provides the (R)-glutamate required for cell wall biosynthesis. The protein is Glutamate racemase of Streptococcus sanguinis (strain SK36).